We begin with the raw amino-acid sequence, 227 residues long: MAQLRWLGHAATLLTFGNKNVIIDPMIKDNPLSPVKLDYFKNNLDIIIVTHDHYDHLGDTVELLRMNPKAKLFATYDLEAHLAETYKISEESIIPANVGGFVEVDGIKLALTKAVHSSTHSDPTGAIVSAEGITVYHAGDTGLFEDMKLIGEVFKPDYALLPIGGRFTMDPYQASISVELIKPKKGAIPIHYNTWDLIKVDVNDFVKLVKNKGYNPIVLQPGQTITL.

This sequence belongs to the UPF0173 family.

The sequence is that of UPF0173 metal-dependent hydrolase SSO0099 from Saccharolobus solfataricus (strain ATCC 35092 / DSM 1617 / JCM 11322 / P2) (Sulfolobus solfataricus).